The following is a 153-amino-acid chain: Ribonuclease HI (153 aa).

Residues 1–141 (MKSVNIFTDG…CDELAKLGAN (141 aa)) enclose the RNase H type-1 domain. Residues Asp-9, Glu-47, Asp-69, and Asp-133 each coordinate Mg(2+).

It belongs to the RNase H family. In terms of assembly, monomer. Requires Mg(2+) as cofactor.

The protein resides in the cytoplasm. The enzyme catalyses Endonucleolytic cleavage to 5'-phosphomonoester.. Its function is as follows. Endonuclease that specifically degrades the RNA of RNA-DNA hybrids. This Haemophilus ducreyi (strain 35000HP / ATCC 700724) protein is Ribonuclease HI.